The chain runs to 360 residues: BLOC-1-related complex subunit 6 (360 aa).

Residues 1 to 10 show a composition bias toward basic and acidic residues; sequence MEAARGRLGP. The segment at 1–201 is disordered; it reads MEAARGRLGP…AGAGGGRRAT (201 aa). A compositionally biased stretch (polar residues) spans 23–35; sequence VTFSGRPSRTLSK. The residue at position 41 (T41) is a Phosphothreonine. Basic and acidic residues predominate over residues 71–83; it reads HRPELDTWEDKPS. Positions 89 to 100 are enriched in low complexity; the sequence is SGARGSRGTSGS. A Phosphoserine modification is found at S130. The span at 144–156 shows a compositional bias: acidic residues; sequence EGDDDDDGDDEEA. S173 carries the post-translational modification Phosphoserine. Residues 179-198 show a composition bias toward gly residues; sequence GACGGGGSSSSGEAGAGGGR. Residue T201 is modified to Phosphothreonine. A Phosphoserine modification is found at S204.

This sequence belongs to the BORCS6 family. In terms of assembly, component of the BLOC-one-related complex (BORC) which is composed of BLOC1S1, BLOC1S2, BORCS5, BORCS6, BORCS7, BORCS8, KXD1 and SNAPIN.

It is found in the lysosome membrane. As part of the BORC complex may play a role in lysosomes movement and localization at the cell periphery. Associated with the cytosolic face of lysosomes, the BORC complex may recruit ARL8B and couple lysosomes to microtubule plus-end-directed kinesin motor. This is BLOC-1-related complex subunit 6 from Rattus norvegicus (Rat).